Here is a 420-residue protein sequence, read N- to C-terminus: Adenylosuccinate synthetase (420 aa).

Residues 11–17 (GDEGKGK) and 39–41 (GHT) contribute to the GTP site. Asp-12 (proton acceptor) is an active-site residue. Mg(2+)-binding residues include Asp-12 and Gly-39. Residues 12 to 15 (DEGK), 37 to 40 (NAGH), Thr-129, Arg-143, Asn-218, Thr-233, and Arg-297 contribute to the IMP site. Residue His-40 is the Proton donor of the active site. 293 to 299 (VTTGRKR) contributes to the substrate binding site. Residues Arg-299, 325 to 327 (KLD), and 407 to 409 (GTG) contribute to the GTP site.

This sequence belongs to the adenylosuccinate synthetase family. As to quaternary structure, homodimer. The cofactor is Mg(2+).

The protein localises to the cytoplasm. The catalysed reaction is IMP + L-aspartate + GTP = N(6)-(1,2-dicarboxyethyl)-AMP + GDP + phosphate + 2 H(+). Its pathway is purine metabolism; AMP biosynthesis via de novo pathway; AMP from IMP: step 1/2. Its function is as follows. Plays an important role in the de novo pathway and in the salvage pathway of purine nucleotide biosynthesis. Catalyzes the first committed step in the biosynthesis of AMP from IMP. The protein is Adenylosuccinate synthetase of Uncinocarpus reesii (strain UAMH 1704).